The chain runs to 131 residues: Small ribosomal subunit protein uS8 (131 aa).

This sequence belongs to the universal ribosomal protein uS8 family. Part of the 30S ribosomal subunit. Contacts proteins S5 and S12.

In terms of biological role, one of the primary rRNA binding proteins, it binds directly to 16S rRNA central domain where it helps coordinate assembly of the platform of the 30S subunit. In Chlorobium limicola (strain DSM 245 / NBRC 103803 / 6330), this protein is Small ribosomal subunit protein uS8.